The primary structure comprises 293 residues: NAD kinase (293 aa).

The Proton acceptor role is filled by D68. Residues 68–69 (DG), 142–143 (ND), R153, D172, and 183–188 (TAYSLS) contribute to the NAD(+) site.

The protein belongs to the NAD kinase family. The cofactor is a divalent metal cation.

It is found in the cytoplasm. It carries out the reaction NAD(+) + ATP = ADP + NADP(+) + H(+). Functionally, involved in the regulation of the intracellular balance of NAD and NADP, and is a key enzyme in the biosynthesis of NADP. Catalyzes specifically the phosphorylation on 2'-hydroxyl of the adenosine moiety of NAD to yield NADP. This is NAD kinase from Lachnospira eligens (strain ATCC 27750 / DSM 3376 / VPI C15-48 / C15-B4) (Eubacterium eligens).